A 464-amino-acid chain; its full sequence is Protein FAM90A14 (464 aa).

3 disordered regions span residues 1–42 (MMAR…DPRL), 70–389 (PATL…HDGA), and 411–437 (APSF…SEAP). 2 stretches are compositionally biased toward basic and acidic residues: residues 74–89 (GKKE…KPRV) and 97–114 (NKDK…DPQR). Positions 180–197 (LASLSPLRKASLSSSSSL) are enriched in low complexity.

This sequence belongs to the FAM90 family.

This chain is Protein FAM90A14, found in Homo sapiens (Human).